A 210-amino-acid polypeptide reads, in one-letter code: uncharacterized protein (210 aa).

A compositionally biased stretch (low complexity) spans 101–114 (QELPEPSSPQSQSS). The interval 101–166 (QELPEPSSPQ…SSGVSSDLQK (66 aa)) is disordered. The segment covering 147–164 (RSTSPVTASTSSGVSSDL) has biased composition (polar residues).

This is an uncharacterized protein from Alcelaphine herpesvirus 1 (strain C500) (AlHV-1).